The primary structure comprises 357 residues: Alanine racemase (357 aa).

The Proton acceptor; specific for D-alanine role is filled by Lys-35. N6-(pyridoxal phosphate)lysine is present on Lys-35. Arg-130 is a binding site for substrate. Tyr-255 serves as the catalytic Proton acceptor; specific for L-alanine. Met-303 contacts substrate.

The protein belongs to the alanine racemase family. It depends on pyridoxal 5'-phosphate as a cofactor.

The catalysed reaction is L-alanine = D-alanine. Its pathway is amino-acid biosynthesis; D-alanine biosynthesis; D-alanine from L-alanine: step 1/1. Catalyzes the interconversion of L-alanine and D-alanine. May also act on other amino acids. The polypeptide is Alanine racemase (alr) (Nitrosospira multiformis (strain ATCC 25196 / NCIMB 11849 / C 71)).